A 322-amino-acid chain; its full sequence is uncharacterized protein (322 aa).

Residues 277 to 322 (LVTYGGKDGPSDNEDGPSDDEDGPSDDEEGLSKDGVSEYYQSDLDD) are disordered. Acidic residues predominate over residues 287–305 (SDNEDGPSDDEDGPSDDEE).

This is an uncharacterized protein from Frog virus 3 (isolate Goorha) (FV-3).